The primary structure comprises 529 residues: Peptide chain release factor 3 (529 aa).

Residues 7-275 (EQRRTFGIIS…AVVELAPSPR (269 aa)) enclose the tr-type G domain. Residues 16–23 (SHPDAGKT), 84–88 (DTPGH), and 138–141 (NKLD) each bind GTP.

It belongs to the TRAFAC class translation factor GTPase superfamily. Classic translation factor GTPase family. PrfC subfamily.

It localises to the cytoplasm. In terms of biological role, increases the formation of ribosomal termination complexes and stimulates activities of RF-1 and RF-2. It binds guanine nucleotides and has strong preference for UGA stop codons. It may interact directly with the ribosome. The stimulation of RF-1 and RF-2 is significantly reduced by GTP and GDP, but not by GMP. The protein is Peptide chain release factor 3 of Syntrophus aciditrophicus (strain SB).